A 480-amino-acid chain; its full sequence is Uridine 5'-monophosphate synthase (480 aa).

At A2 the chain carries N-acetylalanine. The interval 2–214 is OPRTase; that stretch reads AVARAALGPL…VFVAANHNGS (213 aa). A Phosphotyrosine modification is found at Y37. S214 carries the post-translational modification Phosphoserine. Residues 215–220 form a domain linker region; that stretch reads PLSIKE. The segment at 221–480 is OMPdecase; that stretch reads APKELSFGAR…WEAYLSRLGV (260 aa). Residue S257 coordinates orotidine 5'-phosphate. Residues S257, D259, and 281–283 contribute to the UMP site; that span reads KTH. Orotidine 5'-phosphate is bound at residue K281. Residues D312, K314, and D317 each act as for OMPdecase activity in the active site. Orotidine 5'-phosphate contacts are provided by residues K314, D317, T321, S372, 430–432, and 450–451; these read QQY and GR. UMP contacts are provided by residues D317, T321, S372, 430-432, and 450-451; these read QQY and GR.

The protein in the N-terminal section; belongs to the purine/pyrimidine phosphoribosyltransferase family. It in the C-terminal section; belongs to the OMP decarboxylase family. Homodimer; dimerization is required for enzymatic activity.

It carries out the reaction orotidine 5'-phosphate + diphosphate = orotate + 5-phospho-alpha-D-ribose 1-diphosphate. The enzyme catalyses orotidine 5'-phosphate + H(+) = UMP + CO2. The protein operates within pyrimidine metabolism; UMP biosynthesis via de novo pathway; UMP from orotate: step 1/2. It participates in pyrimidine metabolism; UMP biosynthesis via de novo pathway; UMP from orotate: step 2/2. Bifunctional enzyme catalyzing the last two steps of de novo pyrimidine biosynthesis, orotate phosphoribosyltransferase (OPRT), which converts orotate to orotidine-5'-monophosphate (OMP), and orotidine-5'-monophosphate decarboxylase (ODC), the terminal enzymatic reaction that decarboxylates OMP to uridine monophosphate (UMP). The sequence is that of Uridine 5'-monophosphate synthase from Homo sapiens (Human).